The primary structure comprises 390 residues: GTPase Obg (390 aa).

Positions 1–159 (MKFVDEATIL…RDLQLELMLL (159 aa)) constitute an Obg domain. Residues 127 to 146 (NTRFKSSVNRTPRQKTMGTP) are disordered. Positions 129–143 (RFKSSVNRTPRQKTM) are enriched in polar residues. The region spanning 160-333 (ADVGMLGMPN…LCWDVMHFII (174 aa)) is the OBG-type G domain. GTP-binding positions include 166–173 (GMPNAGKS), 191–195 (FTTLV), 213–216 (DIPG), 283–286 (NKID), and 314–316 (SAA). Mg(2+) contacts are provided by Ser173 and Thr193. Residues 364–384 (MEAEAEEEWDDDWDEDDDEGV) are compositionally biased toward acidic residues. The interval 364–390 (MEAEAEEEWDDDWDEDDDEGVEIVYQR) is disordered.

This sequence belongs to the TRAFAC class OBG-HflX-like GTPase superfamily. OBG GTPase family. As to quaternary structure, monomer. Mg(2+) is required as a cofactor.

The protein resides in the cytoplasm. Functionally, an essential GTPase which binds GTP, GDP and possibly (p)ppGpp with moderate affinity, with high nucleotide exchange rates and a fairly low GTP hydrolysis rate. Plays a role in control of the cell cycle, stress response, ribosome biogenesis and in those bacteria that undergo differentiation, in morphogenesis control. The polypeptide is GTPase Obg (Cronobacter sakazakii (strain ATCC BAA-894) (Enterobacter sakazakii)).